Here is a 306-residue protein sequence, read N- to C-terminus: MMQSKIESIIEECRKYTREGEVASYIPELKKADKDALGIYIDKLDGNEFCAGDYDTKFTIQSISKIIALIIAIMDNGMEKVLSKVGVEPSAYSFNSIVTLEVKNANKPLNPMINAGAIATVSLIKGNSPEEIIERILEFTRKVTGNKNIKVNEEVYQSEKKTGDRNRSLAYFMKGTGIIEKDVEKVLDAYFQQCSIEVTCKDIAKIASFLANDGVLPSTGERIIPAEVAKIVKAVMVTCGMYDASGSFAVKVGIPSKSGVGGGILATVPGVMGIGVFGPALDKKGNSIAGVKILERLSEELNLSIF.

Residues S62, N114, E159, N166, Y190, Y242, and V260 each coordinate substrate.

The protein belongs to the glutaminase family. Homotetramer.

It catalyses the reaction L-glutamine + H2O = L-glutamate + NH4(+). The polypeptide is Glutaminase (Clostridium tetani (strain Massachusetts / E88)).